The following is a 477-amino-acid chain: Glycogen synthase (477 aa).

Lys15 lines the ADP-alpha-D-glucose pocket.

The protein belongs to the glycosyltransferase 1 family. Bacterial/plant glycogen synthase subfamily.

It carries out the reaction [(1-&gt;4)-alpha-D-glucosyl](n) + ADP-alpha-D-glucose = [(1-&gt;4)-alpha-D-glucosyl](n+1) + ADP + H(+). Its pathway is glycan biosynthesis; glycogen biosynthesis. Its function is as follows. Synthesizes alpha-1,4-glucan chains using ADP-glucose. This chain is Glycogen synthase, found in Salmonella typhi.